We begin with the raw amino-acid sequence, 237 residues long: Ribonuclease PH (237 aa).

Phosphate contacts are provided by residues R86 and 124–126; that span reads GTR.

It belongs to the RNase PH family. As to quaternary structure, homohexameric ring arranged as a trimer of dimers.

It catalyses the reaction tRNA(n+1) + phosphate = tRNA(n) + a ribonucleoside 5'-diphosphate. Its function is as follows. Phosphorolytic 3'-5' exoribonuclease that plays an important role in tRNA 3'-end maturation. Removes nucleotide residues following the 3'-CCA terminus of tRNAs; can also add nucleotides to the ends of RNA molecules by using nucleoside diphosphates as substrates, but this may not be physiologically important. Probably plays a role in initiation of 16S rRNA degradation (leading to ribosome degradation) during starvation. The polypeptide is Ribonuclease PH (Shewanella sp. (strain W3-18-1)).